Consider the following 125-residue polypeptide: Large ribosomal subunit protein uL18 (125 aa).

The residue at position 2 (Gly-2) is an N-acetylglycine. 2 positions are modified to N6-acetyllysine: Lys-5 and Lys-48.

This sequence belongs to the universal ribosomal protein uL18 family. Component of the large ribosomal subunit (LSU). Part of the 5S RNP complex, which is a LSU subcomplex composed of the 5S RNA, RPL5 and RPL11. Component of a hexameric 5S RNP precursor complex, composed of 5S RNA, RRS1, RPF2/BXDC1, RPL5, RPL11 and HEATR3; this complex acts as a precursor for ribosome assembly. Interacts with NVL in an ATP-dependent manner. Interacts with RRP1B. Interacts with IPO5, IPO7 and KPNB1; these interactions may be involved in RPL5 nuclear import for the assembly of ribosomal subunits. Interacts with RRP1B.

It localises to the cytoplasm. Its subcellular location is the nucleus. The protein localises to the nucleolus. Component of the ribosome, a large ribonucleoprotein complex responsible for the synthesis of proteins in the cell. The small ribosomal subunit (SSU) binds messenger RNAs (mRNAs) and translates the encoded message by selecting cognate aminoacyl-transfer RNA (tRNA) molecules. The large subunit (LSU) contains the ribosomal catalytic site termed the peptidyl transferase center (PTC), which catalyzes the formation of peptide bonds, thereby polymerizing the amino acids delivered by tRNAs into a polypeptide chain. The nascent polypeptides leave the ribosome through a tunnel in the LSU and interact with protein factors that function in enzymatic processing, targeting, and the membrane insertion of nascent chains at the exit of the ribosomal tunnel. As part of the 5S RNP/5S ribonucleoprotein particle it is an essential component of the LSU, required for its formation and the maturation of rRNAs. It also couples ribosome biogenesis to p53/TP53 activation. As part of the 5S RNP it accumulates in the nucleoplasm and inhibits MDM2, when ribosome biogenesis is perturbed, mediating the stabilization and the activation of TP53. The sequence is that of Large ribosomal subunit protein uL18 (RPL5) from Sus scrofa (Pig).